Consider the following 346-residue polypeptide: Protein Spea_1705 (346 aa).

Residue C101 is the Proton acceptor of the active site. Residues 102–103, D262, and 267–268 each bind substrate; these read GH and GT.

It belongs to the proline racemase family.

The enzyme catalyses trans-3-hydroxy-L-proline = 1-pyrroline-2-carboxylate + H2O. In terms of biological role, in vitro, catalyzes the dehydration of trans-3-hydroxy-L-proline (t3LHyp) to Delta(1)-pyrroline-2-carboxylate (Pyr2C), albeit with very low efficiency. The physiological substrate may be different. Displays neither trans-4-hydroxy-L-proline (t4LHyp) epimerase nor proline racemase activity. The chain is Protein Spea_1705 from Shewanella pealeana (strain ATCC 700345 / ANG-SQ1).